The sequence spans 224 residues: Menaquinol:cytochrome c reductase cytochrome b subunit (224 aa).

A helical membrane pass occupies residues 37-57; sequence FSAFVYCFGGLTFFVTVIQIL. Y42 is a heme b binding site. C43 is a heme c binding site. 4 residues coordinate heme b: R91, H94, H108, and R111. 3 consecutive transmembrane segments (helical) span residues 96–116, 126–146, and 195–215; these read WGAS…FFQG, WIVG…GYLL, and IHVF…FLMI. Positions 196 and 211 each coordinate heme b. Residues R216 and I220 each coordinate heme c. S221 is a heme b binding site.

The protein belongs to the cytochrome b family. As to quaternary structure, the main subunits of the menaquinol:cytochrome c complex are a Rieske-type iron-sulfur protein (QcrA), a cytochrome b (QcrB) and a cytochrome c (QcrC). It depends on heme b as a cofactor. Requires heme c as cofactor.

It is found in the cell membrane. In terms of biological role, component of the menaquinol:cytochrome c reductase complex. This chain is Menaquinol:cytochrome c reductase cytochrome b subunit (qcrB), found in Geobacillus thermodenitrificans.